The sequence spans 168 residues: DAZ-associated protein 2 (168 aa).

The span at 1–13 (MNSKGQYPTQPTY) shows a compositional bias: low complexity. The disordered stretch occupies residues 1 to 25 (MNSKGQYPTQPTYPVQPPGNPVYPQ). Positions 39–42 (PPAY) match the PPAY motif. Residue serine 77 is modified to Phosphoserine.

As to quaternary structure, interacts with SOX6. Interacts with DAZ1 and DAZL. Interacts with IL17RB. May interact with FAM168B. Interacts with INCA1. Interacts with EIF4G1 and EIF4G2. Interacts (via PPAY motif) with NEDD4 (via WW domains). Interacts with transcription factor TCF4; the interaction results in localization of DAZAP2 to the nucleus. Interacts with transcription factors TCF7 and TCF7L1. Interacts with transcription factor LEF1. Interacts with serine/threonine-protein kinase HIPK2; the interaction results in phosphorylation of DAZAP2 which causes localization of DAZAP2 to the nucleus, reduces interaction of DAZAP2 with HIPK2 and prevents DAZAP2-dependent degradation of HIPK2. Interacts with ubiquitin ligase SIAH1; the interaction is decreased following phosphorylation of DAZAP2 by HIPK2. Interacts with TP53; the interaction is triggered by DNA damage. Post-translationally, ubiquitinated by SMURF2, leading to proteasomal degradation. Ubiquitinated by NEDD4, leading to proteasomal degradation. In terms of processing, following DNA damage, phosphorylated by HIPK2 which promotes DAZAP2 localization to the nucleus, reduces interaction of DAZAP2 with HIPK2 and SIAH1, and prevents DAZAP2-dependent ubiquitination of HIPK2 by E3 ubiquitin-protein ligase SIAH1 and subsequent HIPK2 proteasomal degradation.

It localises to the cytoplasm. The protein localises to the nucleus. The protein resides in the nucleus speckle. Its subcellular location is the nuclear body. It is found in the stress granule. Its function is as follows. In unstressed cells, promotes SIAH1-mediated polyubiquitination and degradation of the serine/threonine-protein kinase HIPK2, probably by acting as a loading factor that potentiates complex formation between HIPK2 and ubiquitin ligase SIAH1. In response to DNA damage, localizes to the nucleus following phosphorylation by HIPK2 and modulates the expression of a subset of TP53/p53 target genes by binding to TP53 at target gene promoters. This limits the expression of a number of cell death-mediating TP53 target genes, reducing DNA damage-induced cell death. Enhances the binding of transcription factor TCF7L2/TCF4, a Wnt signaling pathway effector, to the promoters of target genes. Plays a role in stress granule formation. This chain is DAZ-associated protein 2, found in Bos taurus (Bovine).